Here is a 99-residue protein sequence, read N- to C-terminus: Small ribosomal subunit protein bS18 (99 aa).

This sequence belongs to the bacterial ribosomal protein bS18 family. In terms of assembly, part of the 30S ribosomal subunit. Forms a tight heterodimer with protein bS6.

Its function is as follows. Binds as a heterodimer with protein bS6 to the central domain of the 16S rRNA, where it helps stabilize the platform of the 30S subunit. The polypeptide is Small ribosomal subunit protein bS18 (Christiangramia forsetii (strain DSM 17595 / CGMCC 1.15422 / KT0803) (Gramella forsetii)).